The sequence spans 454 residues: Kynurenine--oxoglutarate transaminase 3 (454 aa).

F2 is modified (N-acetylserine). Residue G71 participates in substrate binding. The residue at position 116 (K116) is an N6-acetyllysine; alternate. K116 carries the N6-succinyllysine; alternate modification. N218 lines the substrate pocket. K280 bears the N6-(pyridoxal phosphate)lysine mark. Position 429 (R429) interacts with substrate.

Belongs to the class-I pyridoxal-phosphate-dependent aminotransferase family. In terms of assembly, homodimer. It depends on pyridoxal 5'-phosphate as a cofactor.

It carries out the reaction L-kynurenine + 2-oxoglutarate = kynurenate + L-glutamate + H2O. It catalyses the reaction L-kynurenine + glyoxylate = kynurenate + glycine + H2O. The catalysed reaction is 3-hydroxy-L-kynurenine + glyoxylate = xanthurenate + glycine + H2O. The enzyme catalyses an S-substituted L-cysteine + H2O = a thiol + pyruvate + NH4(+). Its pathway is amino-acid degradation; L-kynurenine degradation; kynurenate from L-kynurenine: step 1/2. Its function is as follows. Catalyzes the irreversible transamination of the L-tryptophan metabolite L-kynurenine to form kynurenic acid (KA), an intermediate in the tryptophan catabolic pathway which is also a broad spectrum antagonist of the three ionotropic excitatory amino acid receptors among others. May catalyze the beta-elimination of S-conjugates and Se-conjugates of L-(seleno)cysteine, resulting in the cleavage of the C-S or C-Se bond. Has transaminase activity towards L-kynurenine, tryptophan, phenylalanine, serine, cysteine, methionine, histidine, glutamine and asparagine with glyoxylate as an amino group acceptor (in vitro). Has lower activity with 2-oxoglutarate as amino group acceptor (in vitro). The chain is Kynurenine--oxoglutarate transaminase 3 from Homo sapiens (Human).